A 262-amino-acid chain; its full sequence is Acyl-[acyl-carrier-protein]--UDP-N-acetylglucosamine O-acyltransferase (262 aa).

It belongs to the transferase hexapeptide repeat family. LpxA subfamily. As to quaternary structure, homotrimer.

It is found in the cytoplasm. It catalyses the reaction a (3R)-hydroxyacyl-[ACP] + UDP-N-acetyl-alpha-D-glucosamine = a UDP-3-O-[(3R)-3-hydroxyacyl]-N-acetyl-alpha-D-glucosamine + holo-[ACP]. It functions in the pathway glycolipid biosynthesis; lipid IV(A) biosynthesis; lipid IV(A) from (3R)-3-hydroxytetradecanoyl-[acyl-carrier-protein] and UDP-N-acetyl-alpha-D-glucosamine: step 1/6. Functionally, involved in the biosynthesis of lipid A, a phosphorylated glycolipid that anchors the lipopolysaccharide to the outer membrane of the cell. The polypeptide is Acyl-[acyl-carrier-protein]--UDP-N-acetylglucosamine O-acyltransferase (Salmonella dublin (strain CT_02021853)).